Here is a 429-residue protein sequence, read N- to C-terminus: Adenylosuccinate synthetase (429 aa).

GTP is bound by residues Gly12–Lys18 and Gly40–Thr42. Asp13 functions as the Proton acceptor in the catalytic mechanism. 2 residues coordinate Mg(2+): Asp13 and Gly40. Residues Asp13–Lys16, Asn38–His41, Thr129, Arg143, Gln223, Thr238, and Arg302 contribute to the IMP site. Residue His41 is the Proton donor of the active site. Thr298–Arg304 provides a ligand contact to substrate. Residues Arg304, Lys330–Asp332, and Ser412–Ser414 each bind GTP.

The protein belongs to the adenylosuccinate synthetase family. As to quaternary structure, homodimer. Mg(2+) is required as a cofactor.

It localises to the cytoplasm. The enzyme catalyses IMP + L-aspartate + GTP = N(6)-(1,2-dicarboxyethyl)-AMP + GDP + phosphate + 2 H(+). Its pathway is purine metabolism; AMP biosynthesis via de novo pathway; AMP from IMP: step 1/2. Functionally, plays an important role in the de novo pathway of purine nucleotide biosynthesis. Catalyzes the first committed step in the biosynthesis of AMP from IMP. The polypeptide is Adenylosuccinate synthetase (Acidiphilium cryptum (strain JF-5)).